The primary structure comprises 1886 residues: Nuclear pore membrane glycoprotein 210 (1886 aa).

Residues 1–25 (MARASLIQPGLWALLLLQAVGPAVA) form the signal peptide. Residues 26-1805 (AKLNIPKVLL…GASLLSHFLD (1780 aa)) are Perinuclear space-facing. N337, N484, N681, and N1039 each carry an N-linked (GlcNAc...) asparagine glycan. One can recognise a BIG2 domain in the interval 1078–1151 (FPPFRLIPRK…VQAVDAETGK (74 aa)). Residues 1806–1828 (SYQVMFFTFFALLAGTAVTIIAY) form a helical membrane-spanning segment. The Cytoplasmic portion of the chain corresponds to 1829–1886 (HTVCAPRELASPLALTPHASPQHSPHYLASSPTAFNTLPSDRKASPPSGLWSPAYASH). Residue S1839 is modified to Phosphoserine. T1844 bears the Phosphothreonine mark. The interval 1866 to 1886 (LPSDRKASPPSGLWSPAYASH) is disordered. A phosphoserine mark is found at S1873, S1876, S1880, and S1885.

This sequence belongs to the NUP210 family. As to quaternary structure, forms dimers and possibly higher-order oligomers. Post-translationally, N-glycosylated, but not all potential glycosylation sites may be used. Contains high-mannose type oligosaccharides. Phosphorylated at Ser-1880 in mitosis specifically; not phosphorylated in interphase.

It is found in the nucleus. Its subcellular location is the nuclear pore complex. The protein localises to the nucleus membrane. The protein resides in the endoplasmic reticulum membrane. Functionally, nucleoporin essential for nuclear pore assembly and fusion, nuclear pore spacing, as well as structural integrity. The polypeptide is Nuclear pore membrane glycoprotein 210 (Nup210) (Rattus norvegicus (Rat)).